A 217-amino-acid polypeptide reads, in one-letter code: Sentrin-specific protease 8 (217 aa).

An N-acetylmethionine modification is found at M1. The protease stretch occupies residues 11–174; that stretch reads SLLRQSDVSL…MYVICNTEAL (164 aa). Residues H102 and D119 contribute to the active site. The active-site Nucleophile is C163.

The protein belongs to the peptidase C48 family.

Protease that catalyzes two essential functions in the NEDD8 pathway: processing of full-length NEDD8 to its mature form and deconjugation of NEDD8 from targeted proteins such as cullins or p53. The protein is Sentrin-specific protease 8 (Senp8) of Rattus norvegicus (Rat).